The chain runs to 185 residues: Ribosome-recycling factor (185 aa).

The protein belongs to the RRF family.

It localises to the cytoplasm. Functionally, responsible for the release of ribosomes from messenger RNA at the termination of protein biosynthesis. May increase the efficiency of translation by recycling ribosomes from one round of translation to another. In Francisella tularensis subsp. holarctica (strain FTNF002-00 / FTA), this protein is Ribosome-recycling factor.